The following is a 284-amino-acid chain: 4-hydroxybenzoate octaprenyltransferase (284 aa).

9 helical membrane passes run 19-39 (IGTL…AKGM), 42-62 (FDVL…GCVI), 93-113 (IVLF…MNPL), 114-134 (TIKL…MKRF), 136-156 (HLPQ…AWAA), 161-181 (LPSI…AYDT), 209-229 (LMVG…GMHY), 235-252 (FYWA…QQHL), and 264-284 (AFLN…ITFW).

It belongs to the UbiA prenyltransferase family. Mg(2+) is required as a cofactor.

It localises to the cell inner membrane. The enzyme catalyses all-trans-octaprenyl diphosphate + 4-hydroxybenzoate = 4-hydroxy-3-(all-trans-octaprenyl)benzoate + diphosphate. The protein operates within cofactor biosynthesis; ubiquinone biosynthesis. Functionally, catalyzes the prenylation of para-hydroxybenzoate (PHB) with an all-trans polyprenyl group. Mediates the second step in the final reaction sequence of ubiquinone-8 (UQ-8) biosynthesis, which is the condensation of the polyisoprenoid side chain with PHB, generating the first membrane-bound Q intermediate 3-octaprenyl-4-hydroxybenzoate. The chain is 4-hydroxybenzoate octaprenyltransferase from Vibrio atlanticus (strain LGP32) (Vibrio splendidus (strain Mel32)).